Consider the following 425-residue polypeptide: 5-nitroanthranilic acid aminohydrolase (425 aa).

Residue Asp88 is part of the active site. The Proton acceptor role is filled by Glu158.

This sequence belongs to the peptidase M20A family. Requires Co(2+) as cofactor. The cofactor is Mn(2+). Zn(2+) is required as a cofactor. It depends on Fe(2+) as a cofactor. Ni(2+) serves as cofactor.

The catalysed reaction is 5-nitroanthranilate + H2O + H(+) = 5-nitrosalicylate + NH4(+). Its function is as follows. Catalyzes the deamination of 5-nitroanthranilate (5NAA) to 5-nitrosalicylate (5NSA), the first step in biodegradation of 5-nitroanthranilate. In Bradyrhizobium sp, this protein is 5-nitroanthranilic acid aminohydrolase (naaA).